We begin with the raw amino-acid sequence, 502 residues long: Smr domain-containing protein C1235.03 (502 aa).

Residues Leu150–Glu184 form a disordered region. Residues His157–Asn171 are compositionally biased toward basic residues. Residues Ser411–Ile459 form the Smr domain.

The protein localises to the nucleus. It localises to the nucleolus. The polypeptide is Smr domain-containing protein C1235.03 (Schizosaccharomyces pombe (strain 972 / ATCC 24843) (Fission yeast)).